The sequence spans 336 residues: CMP-sialic acid transporter (336 aa).

Residues 1–9 (MAPARENVS) lie on the Cytoplasmic side of the membrane. The chain crosses the membrane as a helical span at residues 10–30 (LFFKLYCLTVMTLVAAAYTVA). Topologically, residues 31–45 (LRYTRTTAEELYFST) are lumenal. A helical membrane pass occupies residues 46 to 64 (TAVCITEVIKLLISVGLLA). Lysine 55 provides a ligand contact to CMP-N-acetyl-beta-neuraminate. At 65–87 (KETGSLGRFKASLSENVLGSPKE) the chain is on the cytoplasmic side. Residues 88–108 (LAKLSVPSLVYAVQNNMAFLA) traverse the membrane as a helical segment. CMP-N-acetyl-beta-neuraminate is bound at residue 101–102 (QN). Over 109–114 (LSNLDA) the chain is Lumenal. Residues 115–135 (AVYQVTYQLKIPCTALCTVLM) traverse the membrane as a helical segment. 117–124 (YQVTYQLK) provides a ligand contact to CMP-N-acetyl-beta-neuraminate. At 136–141 (LNRTLS) the chain is on the cytoplasmic side. A helical membrane pass occupies residues 142-160 (KLQWISVFMLCGGVTLVQW). The Lumenal portion of the chain corresponds to 161 to 175 (KPAQATKVVVAQNPL). Residues 176 to 196 (LGFGAIAIAVLCSGFAGVYFE) form a helical membrane-spanning segment. CMP-N-acetyl-beta-neuraminate is bound at residue serine 188. The Cytoplasmic portion of the chain corresponds to 197-209 (KVLKSSDTSLWVR). CMP-N-acetyl-beta-neuraminate is bound at residue 210 to 214 (NIQMY). Residues 210–228 (NIQMYLSGIVVTLAGTYLS) form a helical membrane-spanning segment. Residues 229-243 (DGAEIQEKGFFYGYT) are Lumenal-facing. A helical membrane pass occupies residues 244–262 (YYVWFVIFLASVGGLYTSV). Residues 263–269 (VVKYTDN) are Cytoplasmic-facing. A helical membrane pass occupies residues 270-288 (IMKGFSAAAAIVLSTIASV). CMP-N-acetyl-beta-neuraminate is bound at residue lysine 272. The Lumenal portion of the chain corresponds to 289–296 (LLFGLQIT). The helical transmembrane segment at 297–315 (LSFALGALLVCVSIYLYGL) threads the bilayer. Topologically, residues 316–336 (PRQDTTSIQQEATSKERIIGV) are cytoplasmic. The interval 316–336 (PRQDTTSIQQEATSKERIIGV) is disordered.

Belongs to the nucleotide-sugar transporter family. SLC35A subfamily. As to quaternary structure, monomer. As to expression, ubiquitous. Found in all the tissues examined including skeletal muscle, brain, heart, liver, kidney and spleen.

It localises to the golgi apparatus membrane. The enzyme catalyses CMP-N-acetyl-beta-neuraminate(in) + CMP(out) = CMP-N-acetyl-beta-neuraminate(out) + CMP(in). It catalyses the reaction CMP-N-acetyl-beta-neuraminate(in) + AMP(out) = CMP-N-acetyl-beta-neuraminate(out) + AMP(in). It carries out the reaction CDP-L-ribitol(in) + CDP(out) = CDP-L-ribitol(out) + CDP(in). The catalysed reaction is UMP(out) + CMP-N-acetyl-beta-neuraminate(in) = UMP(in) + CMP-N-acetyl-beta-neuraminate(out). Transports CMP-sialic acid from the cytosol into the Golgi apparatus, functioning as an antiporter that exchanges CMP-sialic acid for CMP. Binds both CMP-sialic acid and free CMP, but has higher affinity for free CMP. Also able to exchange CMP-sialic acid for AMP and UMP. Also mediates the transport of CDP-ribitol. The protein is CMP-sialic acid transporter of Mus musculus (Mouse).